We begin with the raw amino-acid sequence, 204 residues long: dITP/XTP pyrophosphatase (204 aa).

8–13 (SRNRKK) is a binding site for substrate. Aspartate 73 acts as the Proton acceptor in catalysis. Mg(2+) is bound at residue aspartate 73. Substrate contacts are provided by residues serine 74, 155 to 158 (FGYD), lysine 179, and 184 to 185 (HR).

The protein belongs to the HAM1 NTPase family. As to quaternary structure, homodimer. Requires Mg(2+) as cofactor.

It catalyses the reaction XTP + H2O = XMP + diphosphate + H(+). The enzyme catalyses dITP + H2O = dIMP + diphosphate + H(+). It carries out the reaction ITP + H2O = IMP + diphosphate + H(+). Pyrophosphatase that catalyzes the hydrolysis of nucleoside triphosphates to their monophosphate derivatives, with a high preference for the non-canonical purine nucleotides XTP (xanthosine triphosphate), dITP (deoxyinosine triphosphate) and ITP. Seems to function as a house-cleaning enzyme that removes non-canonical purine nucleotides from the nucleotide pool, thus preventing their incorporation into DNA/RNA and avoiding chromosomal lesions. This chain is dITP/XTP pyrophosphatase, found in Mycolicibacterium paratuberculosis (strain ATCC BAA-968 / K-10) (Mycobacterium paratuberculosis).